Consider the following 302-residue polypeptide: Probable lipid kinase YegS-like (302 aa).

One can recognise a DAGKc domain in the interval 1–129 (MDKDKVLLVL…IDLGAVNGKL (129 aa)). ATP contacts are provided by residues Thr-39, 65-71 (GDGTLRE), and Thr-92. The Mg(2+) site is built by Arg-210, Asp-213, and Leu-215. The active-site Proton acceptor is Glu-268.

This sequence belongs to the diacylglycerol/lipid kinase family. YegS lipid kinase subfamily. Requires Mg(2+) as cofactor. The cofactor is Ca(2+).

The protein localises to the cytoplasm. Functionally, probably phosphorylates lipids; the in vivo substrate is unknown. The chain is Probable lipid kinase YegS-like from Pseudomonas aeruginosa (strain UCBPP-PA14).